Reading from the N-terminus, the 110-residue chain is Mite allergen Lep d 5 (110 aa).

This sequence belongs to the mite group 5 allergen family.

The protein is Mite allergen Lep d 5 of Lepidoglyphus destructor (Storage mite).